The chain runs to 281 residues: sn-glycerol-3-phosphate transport system permease protein UgpE (281 aa).

Transmembrane regions (helical) follow at residues 16–36 (LILG…AATL), 85–105 (FSIT…IVWF), 113–133 (FFWM…FPTV), 142–162 (LDSY…TFLF), 202–222 (ALFV…LLII), and 247–267 (WNQV…IVLA). The 192-residue stretch at 77–268 (MLNSFIMAFS…IPPVVIVLAM (192 aa)) folds into the ABC transmembrane type-1 domain.

The protein belongs to the binding-protein-dependent transport system permease family. UgpAE subfamily. As to quaternary structure, the complex is composed of two ATP-binding proteins (UgpC), two transmembrane proteins (UgpA and UgpE) and a solute-binding protein (UgpB).

Its subcellular location is the cell inner membrane. Its function is as follows. Part of the ABC transporter complex UgpBAEC involved in sn-glycerol-3-phosphate (G3P) import. Probably responsible for the translocation of the substrate across the membrane. The polypeptide is sn-glycerol-3-phosphate transport system permease protein UgpE (ugpE) (Salmonella choleraesuis (strain SC-B67)).